A 256-amino-acid chain; its full sequence is Chitinase 11 (256 aa).

Residues Met-1 to Gly-22 form the signal peptide. Disulfide bonds link Cys-48/Cys-109 and Cys-214/Cys-247. The Proton donor role is filled by Glu-91.

It belongs to the glycosyl hydrolase 19 family. Chitinase class II subfamily. In terms of tissue distribution, expressed in leaves and at lower levels in roots, sheaths and meristems.

It carries out the reaction Random endo-hydrolysis of N-acetyl-beta-D-glucosaminide (1-&gt;4)-beta-linkages in chitin and chitodextrins.. This chain is Chitinase 11 (Cht11), found in Oryza sativa subsp. japonica (Rice).